A 394-amino-acid chain; its full sequence is Protein TsgA homolog (394 aa).

12 helical membrane-spanning segments follow: residues 11–31, 51–71, 78–98, 101–121, 134–154, 162–182, 206–226, 250–270, 273–293, 297–317, 332–352, and 361–381; these read WISF…GMVM, FLNA…EIVP, FGFV…SIAL, VSMF…TFLI, LLFT…VAAV, WYWV…LTFG, IGVL…LGFI, FWMS…FFDL, ILTV…NGAP, AWFI…IITL, FVLT…GPIV, and LQTA…LGFV.

This sequence belongs to the major facilitator superfamily. TsgA family.

It localises to the cell inner membrane. This chain is Protein TsgA homolog, found in Enterobacter sp. (strain 638).